Consider the following 353-residue polypeptide: UDP-N-acetylglucosamine--N-acetylmuramyl-(pentapeptide) pyrophosphoryl-undecaprenol N-acetylglucosamine transferase (353 aa).

UDP-N-acetyl-alpha-D-glucosamine contacts are provided by residues 10 to 12, asparagine 124, serine 183, and glutamine 283; that span reads TGG.

This sequence belongs to the glycosyltransferase 28 family. MurG subfamily.

Its subcellular location is the cell inner membrane. It catalyses the reaction di-trans,octa-cis-undecaprenyl diphospho-N-acetyl-alpha-D-muramoyl-L-alanyl-D-glutamyl-meso-2,6-diaminopimeloyl-D-alanyl-D-alanine + UDP-N-acetyl-alpha-D-glucosamine = di-trans,octa-cis-undecaprenyl diphospho-[N-acetyl-alpha-D-glucosaminyl-(1-&gt;4)]-N-acetyl-alpha-D-muramoyl-L-alanyl-D-glutamyl-meso-2,6-diaminopimeloyl-D-alanyl-D-alanine + UDP + H(+). It participates in cell wall biogenesis; peptidoglycan biosynthesis. Cell wall formation. Catalyzes the transfer of a GlcNAc subunit on undecaprenyl-pyrophosphoryl-MurNAc-pentapeptide (lipid intermediate I) to form undecaprenyl-pyrophosphoryl-MurNAc-(pentapeptide)GlcNAc (lipid intermediate II). The polypeptide is UDP-N-acetylglucosamine--N-acetylmuramyl-(pentapeptide) pyrophosphoryl-undecaprenol N-acetylglucosamine transferase (Helicobacter pylori (strain HPAG1)).